Here is a 648-residue protein sequence, read N- to C-terminus: Threonine--tRNA ligase (648 aa).

A TGS domain is found at methionine 1 to threonine 61. Positions aspartate 243–proline 549 are catalytic. Cysteine 349, histidine 400, and histidine 526 together coordinate Zn(2+).

Belongs to the class-II aminoacyl-tRNA synthetase family. In terms of assembly, homodimer. It depends on Zn(2+) as a cofactor.

Its subcellular location is the cytoplasm. It carries out the reaction tRNA(Thr) + L-threonine + ATP = L-threonyl-tRNA(Thr) + AMP + diphosphate + H(+). In terms of biological role, catalyzes the attachment of threonine to tRNA(Thr) in a two-step reaction: L-threonine is first activated by ATP to form Thr-AMP and then transferred to the acceptor end of tRNA(Thr). Also edits incorrectly charged L-seryl-tRNA(Thr). The protein is Threonine--tRNA ligase of Orientia tsutsugamushi (strain Ikeda) (Rickettsia tsutsugamushi).